Here is a 503-residue protein sequence, read N- to C-terminus: Mitochondrial antiviral-signaling protein (503 aa).

At 1-478 (MTFAEDKTYK…HCASSMPWAK (478 aa)) the chain is on the cytoplasmic side. Residues K7 and K10 each participate in a glycyl lysine isopeptide (Lys-Gly) (interchain with G-Cter in ubiquitin) cross-link. Residues 10-77 (KYIRDNHSKF…WVEVFIRALQ (68 aa)) form the CARD domain. Residues 10–77 (KYIRDNHSKF…WVEVFIRALQ (68 aa)) form a required for interaction with NLRX1 region. A lipid anchor (S-palmitoyl cysteine) is attached at C79. Positions 119–202 (GPSAFAPGHN…HQEQEPELGG (84 aa)) are disordered. Positions 143-147 (PVQDT) are interaction with TRAF2. Over residues 145–166 (QDTQPPESPVENSEQLLQTNSG) the composition is skewed to polar residues. Phosphoserine occurs at positions 152, 157, 172, 186, and 220. The tract at residues 153-158 (PVENSE) is interaction with TRAF6 1. The segment covering 178 to 189 (PSPNQQALSPQP) has biased composition (polar residues). An Asymmetric dimethylarginine modification is found at R234. Phosphoserine is present on residues S251 and S256. K302 participates in a covalent cross-link: Glycyl lysine isopeptide (Lys-Gly) (interchain with G-Cter in ubiquitin). Residues 337-503 (PSRVPASVAK…MLYRSRRLAQ (167 aa)) form an interaction with DHX33 region. The disordered stretch occupies residues 346–398 (KAPANTIPPERNSKQAKETPEGPATKVTTGGNQTGPNSSIRSLHSGPEMSKPG). Over residues 356–365 (RNSKQAKETP) the composition is skewed to basic and acidic residues. Positions 371–387 (KVTTGGNQTGPNSSIRS) are enriched in polar residues. S384 carries the phosphoserine modification. Residues 415-418 (LAIS) carry the pLxIS motif motif. S418 carries the post-translational modification Phosphoserine; by TBK1. Residues 431-436 (PEENEY) are interaction with TRAF6 2. The segment at 446-466 (SPSADLLGSPEPLATQQPQEE) is disordered. Residues 479–496 (WLGATSALLAVFLAVMLY) form a helical membrane-spanning segment. Topologically, residues 497 to 503 (RSRRLAQ) are mitochondrial intermembrane.

Self-associates and polymerizes (via CARD domains) to form 400 nM long three-stranded helical filaments on mitochondria, filament nucleation requires interaction with RIGI whose CARD domains act as a template for filament assembly. Interacts with RIGI, IFIH1/MDA5, TRAF2, TRAF6 and C1QBP. May interact with FADD, RIPK1, IKBKE, CHUK and IKBKB. Interacts (when phosphorylated) with IRF3; following activation and phosphorylation on the pLxIS motif by TBK1, recruits IRF3. Interacts with NLRX1. Interaction with NLRX1 requires the CARD domain. Interacts with PSMA7. Interacts with TRAFD1. Interacts (via C-terminus) with PCBP2 in a complex containing MAVS/IPS1, PCBP2 and ITCH. Interacts with CYLD. Interacts with SRC. Interacts with DHX58/LGP2 and IKBKE. Interacts with STING1. Interacts with IFIT3 (via N-terminus). Interacts with TBK1 only in the presence of IFIT3. Interacts with TTLL12; the interaction prevents MAVS binding to TBK1 and IKBKE. Interacts with MUL1. Interacts with ANKRD17. Interacts with NDFIP1. Interacts with SMURF1; the interaction is mediated by NDFIP1 and leads to MAVS ubiquitination and degradation. Interacts (via C-terminus) with GPATCH3; the interaction is markedly increased upon viral infection. Directly interacts (via CARD domain) with ATG5 and ATG12, either as ATG5 and ATG12 monomers or as ATG12-ATG5 conjugates. Interacts with DHX33 (via the helicase C-terminal domain). Interacts with DDX3X (via C-terminus); this interaction may occur rapidly, but transiently after viral infection. The interaction with DDX3X potentiates MAVS-mediated IFNB induction. Conversely inhibition of this interaction prevents MAVS-mediated IFNB induction. Transiently interacts with TRAF3 early during viral infection. Interacts with CLPB. Interacts with TRAF3IP3. Interacts with TOMM70; the interaction is enhanced by virus infection. Interacts with ZNFX1. Interacts with DHX15. Interacts with N4BP3; this interaction promotes the polyubiquitination of MAVS. Interacts with TAX1BP1; this interaction induces MAVS polyubiquitination. Interacts with NLRP3; promoting NLRP3 recruitment to mitochondria and activation of the NLRP3 inflammasome. Interacts with ECSIT; this interaction bridges RIGI to the MAVS complex at the mitochondrion. Interacts with UBL7; this interaction promotes MAVS 'Lys-27'-linked ubiquitination leading to type I interferon production. Interacts (via transmembrane domain) with SMIM30/MAVI1 (via transmembrane domain); the interaction disrupts MAVS interaction with RIGI and inhibits MAVS aggregation, resulting in the repression of type I interferon signaling and innate immune responses. Post-translationally, following activation, phosphorylated by TBK1 at Ser-418 in the pLxIS motif. The phosphorylated pLxIS motif constitutes an IRF3-binding motif, leading to recruitment of the transcription factor IRF3 to induce type-I interferons and other cytokines. In terms of processing, ubiquitinated. Undergoes 'Lys-48'-linked polyubiquitination catalyzed by ITCH; ITCH-dependent polyubiquitination is mediated by the interaction with PCBP2 and leads to MAVS/IPS1 proteasomal degradation. Ubiquitinated by RNF125, leading to its degradation by the proteasome. Undergoes 'Lys-48'-linked ubiquitination catalyzed by SMURF1. Undergoes 'Lys-48'-linked ubiquitination catalyzed by MARCHF5 at Lys-7, leading to proteasomal degradation. Ubiquitinated via 'Lys-63'-linked ubiquitination at Lys-10 by TRIM31, promoting MAVS polymerization and formation of three-stranded helical filaments on mitochondria. Undergoes 'Lys-63'-linked ubiquitination leading to enhanced interaction between MAVS and TRAF2. Undergoes 'Lys-27'-linked ubiquitination by UBE2N and TRIM21 leading to enhanced interaction between MAVS and TBK1. Deubiquitinated by USP10 leading to attenuation of RIGI-mediated MAVS aggregation and production of type I interferon. Undergoes 'Lys-48'-linked polyubiquitination catalyzed by RNF115 leading to its degradation. Proteolytically cleaved by apoptotic caspases during apoptosis, leading to its inactivation. Cleavage by CASP3 during virus-induced apoptosis inactivates it, preventing cytokine overproduction. Post-translationally, palmitoylated by ZHDDC4. Palmitoylation promotes MAVS stabilization and activation by inhibiting 'Lys-48'- but facilitating 'Lys-63'-linked ubiquitination.

It localises to the mitochondrion outer membrane. The protein resides in the mitochondrion. Its subcellular location is the peroxisome. Functionally, adapter required for innate immune defense against viruses. Acts downstream of DHX33, RIGI and IFIH1/MDA5, which detect intracellular dsRNA produced during viral replication, to coordinate pathways leading to the activation of NF-kappa-B, IRF3 and IRF7, and to the subsequent induction of antiviral cytokines such as IFN-beta and RANTES (CCL5). Peroxisomal and mitochondrial MAVS act sequentially to create an antiviral cellular state. Upon viral infection, peroxisomal MAVS induces the rapid interferon-independent expression of defense factors that provide short-term protection, whereas mitochondrial MAVS activates an interferon-dependent signaling pathway with delayed kinetics, which amplifies and stabilizes the antiviral response. May activate the same pathways following detection of extracellular dsRNA by TLR3. May protect cells from apoptosis. Involved in NLRP3 inflammasome activation by mediating NLRP3 recruitment to mitochondria. The sequence is that of Mitochondrial antiviral-signaling protein from Mus musculus (Mouse).